The sequence spans 294 residues: 33 kDa chaperonin (294 aa).

2 disulfides stabilise this stretch: C238–C240 and C271–C274.

The protein belongs to the HSP33 family. Post-translationally, under oxidizing conditions two disulfide bonds are formed involving the reactive cysteines. Under reducing conditions zinc is bound to the reactive cysteines and the protein is inactive.

It is found in the cytoplasm. Functionally, redox regulated molecular chaperone. Protects both thermally unfolding and oxidatively damaged proteins from irreversible aggregation. Plays an important role in the bacterial defense system toward oxidative stress. The protein is 33 kDa chaperonin of Clostridium tetani (strain Massachusetts / E88).